A 959-amino-acid chain; its full sequence is Protein NLP7 (959 aa).

The interval 1–22 (MCEPDDNSARNGVTTQPSRSRE) is disordered. A compositionally biased stretch (polar residues) spans 9–18 (ARNGVTTQPS). The 82-residue stretch at 578–659 (KKKTEKKRGK…IESVQGTDGG (82 aa)) folds into the RWP-RK domain. A coiled-coil region spans residues 633–654 (SRKIKKVNRSITKLKRVIESVQ). Polar residues-rich tracts occupy residues 673-687 (THGQ…SPNG), 694-703 (PNTNNSPNHW), and 735-745 (GTPTSHGSCDG). The disordered stretch occupies residues 673 to 760 (THGQTSAQPL…PKVPNQDPLF (88 aa)). Positions 863–945 (TVTIKASYKD…KIVRLLVHDV (83 aa)) constitute a PB1 domain.

As to quaternary structure, interacts with NRG2. As to expression, expressed in roots, stems, leaves, flowers and siliques. Detected in root hairs, emerging secondary roots, vascular tissues, leaf parenchyma cells and stomata.

The protein resides in the nucleus. Functionally, transcription factor involved in regulation of nitrate assimilation and in transduction of the nitrate signal. This is Protein NLP7 (NLP7) from Arabidopsis thaliana (Mouse-ear cress).